We begin with the raw amino-acid sequence, 184 residues long: Zinc metalloproteinase-disintegrin-like ammodytagin (184 aa).

Positions 1–90 constitute a Peptidase M12B domain; that stretch reads KSAAXVTLDL…CPAKCIDNKP (90 aa). Residue Asp20 participates in Ca(2+) binding. His64 serves as a coordination point for Zn(2+). Glu65 is a catalytic residue. 2 residues coordinate Zn(2+): His68 and His74. Asn88, Val100, Asn103, Phe105, and Glu107 together coordinate Ca(2+). Residues 98-124 enclose the Disintegrin domain; it reads PAVCGNYFVELTPGSQCADGVCCDQCR. 2 cysteine pairs are disulfide-bonded: Cys114–Cys120 and Cys165–Cys177.

The protein belongs to the venom metalloproteinase (M12B) family. P-III subfamily. P-IIIc sub-subfamily. In terms of assembly, heterodimer; disulfide-linked. It depends on Zn(2+) as a cofactor. Post-translationally, the N-terminus is blocked. N-glycosylated. Expressed by the venom gland.

The protein localises to the secreted. Inhibited by EDTA, DTT and zinc ions. Partially inhibited by L-cysteine. Not inhibited by 2-propanol or PMSF. Activity is enhanced by calcium or magnesium ions. Its function is as follows. Snake venom zinc metalloprotease that has fibrinogenolytic and hemorrhagic activities in mouse and rats. Hydrolyzes the Aalpha-chain (FGA) and more slowly the Bbeta-chain of fibrinogen (FGB), without affecting the gamma-chain. Its hemorrhagic activity results of its involvement in cleavage of basal membrane components (nidogen and fibronectin but not laminin) and depletion of fibrinogen, prothrombin (F2) and factor X (F10) in blood circulation. Also possess potent azocaseinolytic activity and cleaves insulin B-chain, hydrolyzing it at positions Gln(4)-His(5), His(10)-Leu(11) and Tyr(16)-Leu(17). This Vipera ammodytes ammodytes (Western sand viper) protein is Zinc metalloproteinase-disintegrin-like ammodytagin.